Here is a 199-residue protein sequence, read N- to C-terminus: Ubiquitin-conjugating enzyme E2-22 kDa (199 aa).

The region spanning 4 to 154 (MAVSRIKREF…AKHWTNAYAG (151 aa)) is the UBC core domain. C92 (glycyl thioester intermediate) is an active-site residue. The UBA domain maps to 161–199 (DCDSKIQRLRDMGIDEHEARAVLSKENWNLEKATEGLFS).

The protein belongs to the ubiquitin-conjugating enzyme family. In terms of assembly, interacts with Rpn10. As to expression, during gastrulation, expression is highest in the invaginating posterior midgut primordium (PMG), high expression is also observed in the cephalic furrow and ventral ectodermal neurogenic region. In stage 10-11 embryos, expression is high in the pole cells present in the pocket formed by the PMG. During germ band retraction, expression appears to reinitiate in many tissues, especially the gut and nervous system. After dorsal closure, expression is detectable at low levels throughout the embryo.

It catalyses the reaction S-ubiquitinyl-[E1 ubiquitin-activating enzyme]-L-cysteine + [E2 ubiquitin-conjugating enzyme]-L-cysteine = [E1 ubiquitin-activating enzyme]-L-cysteine + S-ubiquitinyl-[E2 ubiquitin-conjugating enzyme]-L-cysteine.. It participates in protein modification; protein ubiquitination. In terms of biological role, catalyzes the covalent attachment of ubiquitin to other proteins. This Drosophila melanogaster (Fruit fly) protein is Ubiquitin-conjugating enzyme E2-22 kDa.